The chain runs to 206 residues: Small ribosomal subunit protein uS4 (206 aa).

The span at 1–16 shows a compositional bias: basic and acidic residues; that stretch reads MTKRQESKYKIDRRMG. A disordered region spans residues 1–46; sequence MTKRQESKYKIDRRMGENIWGRPKSPVNRREYGPGQHGQRRKGKLS. The S4 RNA-binding domain maps to 94-154; it reads RRLDAVVYRA…EKSKQLAIVL (61 aa).

Belongs to the universal ribosomal protein uS4 family. Part of the 30S ribosomal subunit. Contacts protein S5. The interaction surface between S4 and S5 is involved in control of translational fidelity.

One of the primary rRNA binding proteins, it binds directly to 16S rRNA where it nucleates assembly of the body of the 30S subunit. Functionally, with S5 and S12 plays an important role in translational accuracy. In Parvibaculum lavamentivorans (strain DS-1 / DSM 13023 / NCIMB 13966), this protein is Small ribosomal subunit protein uS4.